The following is a 199-amino-acid chain: Glycerol-3-phosphate acyltransferase (199 aa).

5 helical membrane-spanning segments follow: residues 5–25, 54–74, 82–102, 114–134, and 154–174; these read AYLL…IIFC, AAIG…LIAF, AIGL…FFQF, VFFS…LIVF, and YIWC…CLLI.

It belongs to the PlsY family. In terms of assembly, probably interacts with PlsX.

The protein localises to the cell inner membrane. The catalysed reaction is an acyl phosphate + sn-glycerol 3-phosphate = a 1-acyl-sn-glycero-3-phosphate + phosphate. Its pathway is lipid metabolism; phospholipid metabolism. Functionally, catalyzes the transfer of an acyl group from acyl-phosphate (acyl-PO(4)) to glycerol-3-phosphate (G3P) to form lysophosphatidic acid (LPA). This enzyme utilizes acyl-phosphate as fatty acyl donor, but not acyl-CoA or acyl-ACP. The sequence is that of Glycerol-3-phosphate acyltransferase from Haemophilus ducreyi (strain 35000HP / ATCC 700724).